The following is a 246-amino-acid chain: Bis(5'-nucleosyl)-tetraphosphatase PrpE [asymmetrical] (246 aa).

It belongs to the PrpE family. The cofactor is Ni(2+).

It carries out the reaction P(1),P(4)-bis(5'-guanosyl) tetraphosphate + H2O = GMP + GTP + 2 H(+). In terms of biological role, asymmetrically hydrolyzes Ap4p to yield AMP and ATP. This is Bis(5'-nucleosyl)-tetraphosphatase PrpE [asymmetrical] from Bacillus cereus (strain 03BB102).